A 270-amino-acid polypeptide reads, in one-letter code: 2-epi-5-epi-valiolone 7-phosphate 2-epimerase (270 aa).

Residues Glu143 and Glu236 each act as proton donor/acceptor in the active site.

This sequence belongs to the hyi family.

The catalysed reaction is 2-epi-5-epi-valiolone 7-phosphate = 5-epi-valiolone 7-phosphate. Functionally, involved in the biosynthesis of the alpha-glucosidase inhibitor acarbose. Catalyzes the 2-epimerisation of 2-epi-5-epivaliolone 7-phosphate to yield 5-epi-valiolone 7-phosphate. In Actinoplanes sp. (strain ATCC 31044 / CBS 674.73 / SE50/110), this protein is 2-epi-5-epi-valiolone 7-phosphate 2-epimerase (acbO).